Here is a 334-residue protein sequence, read N- to C-terminus: Protein-methionine-sulfoxide reductase catalytic subunit MsrP (334 aa).

The tat-type signal signal peptide spans 1–44; the sequence is MKAVNPLTENDVTPESLFNARRRTVLKMLGMSAAALSLPGAARA. Residues Asn88, 91–92, Cys146, Thr181, Asn233, Arg238, and 249–251 each bind Mo-molybdopterin; these read YE and GIK.

It belongs to the MsrP family. In terms of assembly, heterodimer of a catalytic subunit (MsrP) and a heme-binding subunit (MsrQ). The cofactor is Mo-molybdopterin. In terms of processing, predicted to be exported by the Tat system. The position of the signal peptide cleavage has not been experimentally proven.

The protein resides in the periplasm. The enzyme catalyses L-methionyl-[protein] + a quinone + H2O = L-methionyl-(S)-S-oxide-[protein] + a quinol. It carries out the reaction L-methionyl-[protein] + a quinone + H2O = L-methionyl-(R)-S-oxide-[protein] + a quinol. Part of the MsrPQ system that repairs oxidized periplasmic proteins containing methionine sulfoxide residues (Met-O), using respiratory chain electrons. Thus protects these proteins from oxidative-stress damage caused by reactive species of oxygen and chlorine generated by the host defense mechanisms. MsrPQ is essential for the maintenance of envelope integrity under bleach stress, rescuing a wide series of structurally unrelated periplasmic proteins from methionine oxidation. The catalytic subunit MsrP is non-stereospecific, being able to reduce both (R-) and (S-) diastereoisomers of methionine sulfoxide. The sequence is that of Protein-methionine-sulfoxide reductase catalytic subunit MsrP from Erwinia tasmaniensis (strain DSM 17950 / CFBP 7177 / CIP 109463 / NCPPB 4357 / Et1/99).